The primary structure comprises 80 residues: MEARVLWLLVVVLVLGSSSLAVAYQGLATNLCEVPPKDRVDCGYPEITSEQCVNRGCCFDSSIHGVPWCFKPLQDTECRF.

The N-terminal stretch at 1 to 23 is a signal peptide; it reads MEARVLWLLVVVLVLGSSSLAVA. The 44-residue stretch at 30 to 73 folds into the P-type domain; the sequence is NLCEVPPKDRVDCGYPEITSEQCVNRGCCFDSSIHGVPWCFKPL. 3 cysteine pairs are disulfide-bonded: Cys-32–Cys-58, Cys-42–Cys-57, and Cys-52–Cys-69.

Monomer. Homodimer; disulfide-linked.

The protein resides in the secreted. It localises to the extracellular space. The protein localises to the extracellular matrix. It is found in the cytoplasm. In terms of biological role, involved in the maintenance and repair of the intestinal mucosa. Promotes the mobility of epithelial cells in healing processes (motogen). The protein is Trefoil factor 3 (TFF3) of Canis lupus familiaris (Dog).